An 83-amino-acid chain; its full sequence is Mu-theraphotoxin-Hhn2e (83 aa).

The first 21 residues, 1–21 (MKASMFLALAGLVLLFVVGYA), serve as a signal peptide directing secretion. Positions 22 to 48 (SESEEKEFPRELLSKIFAVDDFKGEER) are excised as a propeptide. Cystine bridges form between C50–C65, C57–C70, and C64–C77. L81 is modified (leucine amide).

It belongs to the neurotoxin 10 (Hwtx-1) family. 15 (Hntx-3) subfamily. As to quaternary structure, monomer. As to expression, expressed by the venom gland.

The protein resides in the secreted. Lethal neurotoxin. Selectively blocks tetrodotoxin-sensitive voltage-gated sodium channels (Nav). Does not affect tetrodotoxin-resistant voltage-gated sodium channels or calcium channels. The protein is Mu-theraphotoxin-Hhn2e of Cyriopagopus hainanus (Chinese bird spider).